Consider the following 363-residue polypeptide: MVMGILNTFKKVYAVTGFFALLAVFSLSQVGSSAFAACAKVDDCFSCHTTQELNAVHKNTPYQGQSCIVCHKAFAADDTCSDAKDGRFAKISSEININKEDWNKIQRAVHETTEKHLVGRKFLNIYGPLGTGAQSVPLDTYGLPSWASIDMLGEGNEAIHPLKREIAQIYLIYKDFWLFRRDIEFSKKCETPIDISAAIGAAVSVSRKEDDMVFNGLSEMGIPGLLTASGRNIMKLSDWSVIGNGFQDVVLAVEKLTSRGFNGPFALVVSPKLYAYLHRVYERTGQLEIQGVKELVNGGVYQSYVFNKDVALVIATGSLNMDLAVGSNYKVEYWGPQDLNHRFRVVGSSVLRIKCPQAICTLE.

The signal sequence occupies residues 1–36 (MVMGILNTFKKVYAVTGFFALLAVFSLSQVGSSAFA). A diheme c-type cytochrome region spans residues 37 to 74 (ACAKVDDCFSCHTTQELNAVHKNTPYQGQSCIVCHKAF). Cys-44, Cys-47, His-48, Cys-67, Cys-70, and His-71 together coordinate heme. Positions 75–94 (AADDTCSDAKDGRFAKISSE) are linker. Positions 95-363 (ININKEDWNK…KCPQAICTLE (269 aa)) are encapsulin domain.

This sequence belongs to the encapsulin family. Family 1 subfamily. The encapsulin nanocompartment is probably formed by 180 monomers, with the N-terminus (diheme domain) inside. There are 36 pores where the pentamers meet as well as 3-fold axis channels and dimer channels. Requires heme as cofactor.

The protein resides in the encapsulin nanocompartment. Its function is as follows. Fusion of the shell and cargo protein of a type 1 encapsulin nanocompartment. Protein missing its signal peptide makes 33 nm particles in E.coli (called cEnc), protein missing its signal peptide and diheme domain (residues 1-86, called Enc) makes 29 nm particles. The cEnc nancompartment encloses c-type heme. The cargo protein NIR-HAO (AC P0DV45) is probably targeted to the nanocompartment by its association with the diheme domain in cEnc; removal of the diheme domain in Enc halves the amount of cargo. The sequence is that of Diheme-cytochrome-encapsulin shell fusion protein from Kuenenia stuttgartiensis.